The primary structure comprises 309 residues: Protein FdhE (309 aa).

Belongs to the FdhE family.

It localises to the cytoplasm. Its function is as follows. Necessary for formate dehydrogenase activity. This is Protein FdhE from Escherichia coli (strain SMS-3-5 / SECEC).